The primary structure comprises 380 residues: Cytochrome b (380 aa).

Helical transmembrane passes span 34–54, 78–99, 114–134, and 179–199; these read FGSL…LLAM, WLIR…YLHI, WNTG…GYVL, and FFAL…IHLT. Heme b is bound by residues His-84 and His-98. Heme b-binding residues include His-183 and His-197. His-202 lines the a ubiquinone pocket. The next 4 membrane-spanning stretches (helical) occupy residues 227 to 247, 289 to 309, 321 to 341, and 348 to 368; these read LKDL…ALFT, LGGV…PFLH, LSQL…WVGS, and FIII…VLLP.

It belongs to the cytochrome b family. In terms of assembly, the cytochrome bc1 complex contains 11 subunits: 3 respiratory subunits (MT-CYB, CYC1 and UQCRFS1), 2 core proteins (UQCRC1 and UQCRC2) and 6 low-molecular weight proteins (UQCRH/QCR6, UQCRB/QCR7, UQCRQ/QCR8, UQCR10/QCR9, UQCR11/QCR10 and a cleavage product of UQCRFS1). This cytochrome bc1 complex then forms a dimer. It depends on heme b as a cofactor.

Its subcellular location is the mitochondrion inner membrane. Functionally, component of the ubiquinol-cytochrome c reductase complex (complex III or cytochrome b-c1 complex) that is part of the mitochondrial respiratory chain. The b-c1 complex mediates electron transfer from ubiquinol to cytochrome c. Contributes to the generation of a proton gradient across the mitochondrial membrane that is then used for ATP synthesis. The chain is Cytochrome b (MT-CYB) from Herpetotheres cachinnans (Laughing falcon).